A 24-amino-acid polypeptide reads, in one-letter code: Brevinin-1R (24 aa).

Cys18 and Cys24 are joined by a disulfide.

As to expression, expressed by the skin glands.

It localises to the secreted. Antimicrobial peptide. In Pelophylax ridibundus (Marsh frog), this protein is Brevinin-1R.